A 406-amino-acid chain; its full sequence is Flavohemoprotein (406 aa).

The Globin domain maps to 6–144; the sequence is VLLDKKTTEI…IADIFISVEK (139 aa). Position 91 (His-91) interacts with heme b. Residues Tyr-101 and Glu-143 each act as charge relay system in the active site. Residues 155–406 are reductase; that stretch reads GGWTGFRDFK…LFGPLEPIAK (252 aa). The FAD-binding FR-type domain occupies 158 to 267; the sequence is TGFRDFKVIK…SAPAGDFILD (110 aa). FAD is bound by residues Tyr-196 and 212 to 215; that span reads RQYS. 280–285 lines the NADP(+) pocket; sequence GVGLTP. 397-400 serves as a coordination point for FAD; the sequence is LFGP.

The protein belongs to the globin family. Two-domain flavohemoproteins subfamily. It in the C-terminal section; belongs to the flavoprotein pyridine nucleotide cytochrome reductase family. Requires heme b as cofactor. It depends on FAD as a cofactor.

The enzyme catalyses 2 nitric oxide + NADPH + 2 O2 = 2 nitrate + NADP(+) + H(+). It catalyses the reaction 2 nitric oxide + NADH + 2 O2 = 2 nitrate + NAD(+) + H(+). Its function is as follows. Is involved in NO detoxification in an aerobic process, termed nitric oxide dioxygenase (NOD) reaction that utilizes O(2) and NAD(P)H to convert NO to nitrate, which protects the bacterium from various noxious nitrogen compounds. Therefore, plays a central role in the inducible response to nitrosative stress. This is Flavohemoprotein from Oceanobacillus iheyensis (strain DSM 14371 / CIP 107618 / JCM 11309 / KCTC 3954 / HTE831).